The primary structure comprises 352 residues: tRNA pseudouridine synthase D (352 aa).

The Nucleophile role is filled by D81. Residues 157–303 (GVPNYFGTQR…MDHERRILRL (147 aa)) form the TRUD domain.

Belongs to the pseudouridine synthase TruD family.

The catalysed reaction is uridine(13) in tRNA = pseudouridine(13) in tRNA. Functionally, responsible for synthesis of pseudouridine from uracil-13 in transfer RNAs. The polypeptide is tRNA pseudouridine synthase D (Pseudomonas putida (strain GB-1)).